Here is a 1388-residue protein sequence, read N- to C-terminus: MSSSVRRKGKPGKGDGKGSSRGGRGGKGHMNKSHGGGGGGGGSCGGGGGGSRKASNRIWDDGDDFCVFTEPKRPSRPCDSNKSKGETRPKWKPKAKVPLQTLHMTSENQEKVKALLRDLQEQGADAGSERGTSGEEEDSEPQCGEEQGWPAGQEPIFLPDCSPWEYIGPEEVEPPVPECAVSPLAVQKLSRYGFHTEHCQLALRICDGDLGAALEHLLRQCFSETFGERMALSEAAVYVSLNECVEQRQEETLALKSICGEKFIERIQNRVWTIGLELDYLTNKFCKSKQKESSKNVRDTSPETCKFYLKGNCKFGSKCKFKHEVPPHQMIGRAERNVNDPHLDADDDTTFMYELQIRFSKDHKYPYQAPLVAFYSTNENLPLACRLHISEFLYGKALEFAKTSEPVVYSLITLLEEESEIVKLLTHTQHKYSVPPVNVPPVPSETRISKPAYRKPVVPSNTFLSNQMLEGERLSELEEDADEDEGPASIIVENESYVNLKKRSYKRYDRPAKSLFAENSKICRQFQMKQASRQFHAILQERQLLPAWEERETILKLLSKHQVVVISGMTGCGKTTQIPQFILDNSLNGPPERVANIICTQPRRISAISVAERVAKERAERVGLTVGYQIRLESVKSSATRLLYCTTGVLLRRLEGDATLQGVTHIIVDEVHERTEESDFLLLVLKDIVMQRATLQVILMSATLDAGLFSKYFSYCPVITIPGRAFPVDQFFLEDALAVTRYVLQDGSPYMRSMKQIAKEKLKARHNRTAQEEVEEDLRLSLHLQDEEESVKDTIPDQQLDFKQLLIRYKGVSKSVIKTMSVMDFEKVNLELIEALLEWIVDGKHAYPPGAVLVFLPGLAEIKMLYEQLQSNSLFNNRRSHRCVIHPLHSSLSSEEQQAVFVKPPMGVTKIIISTNIAETSITIDDVVYVIDSGKMKEKRYDAGKGMESLEDTFVSQANALQRKGRAGRVASGVCFHLFTSHHYNHQLLKQQLPEIQRVPLEQLCLRIKILEMFSTHNLQSVFSRLIEPPHIDSLRASKVRLRDLGALTPDEKLTPLGYHLASLPVDVRIGKLMLLGSIFRCLDPALTIAASLAFKSPFVSPWDKKEEANQKKLEFAFANSDYLALLCAYKGWQLSTKESARASYNYCRQNFLSGRTLQEMASLKRQFTELLSDIGFVKEGLRAKEIEKRAQGGDGVLDATGEEANTNAENPKLISAVLCAALYPNVVQVKTPEGKFQKTSSGVVRLQPKSAELKFVTKNDGYVHIHPSSVNYQVRHFDSPYLLYHEKIKTSRVFIRDCSMVSVYPLVLFGGGQVNVQLQRGAFVVSLDDGWIRFVAASHQVAELVKELRCELDQLLQDKIKNPSMDLCSCPRGSRIISMIVKLITTQ.

Residues 1–11 (MSSSVRRKGKP) show a composition bias toward basic residues. Disordered regions lie at residues 1 to 107 (MSSS…MTSE) and 121 to 154 (EQGADAGSERGTSGEEEDSEPQCGEEQGWPAGQE). Over residues 34 to 51 (HGGGGGGGGSCGGGGGGS) the composition is skewed to gly residues. Residues 79–89 (DSNKSKGETRP) are compositionally biased toward basic and acidic residues. Residues Ser128 and Ser133 each carry the phosphoserine modification. One can recognise a UBA domain in the interval 175 to 220 (PVPECAVSPLAVQKLSRYGFHTEHCQLALRICDGDLGAALEHLLRQ). Residues 299 to 326 (DTSPETCKFYLKGNCKFGSKCKFKHEVP) form a C3H1-type zinc finger. Ser475 is modified (phosphoserine). One can recognise a Helicase ATP-binding domain in the interval 555 to 722 (LKLLSKHQVV…FSYCPVITIP (168 aa)). Position 568 to 575 (568 to 575 (GMTGCGKT)) interacts with ATP. A DEVH box motif is present at residues 669 to 672 (DEVH). In terms of domain architecture, Helicase C-terminal spans 832–1012 (LIEALLEWIV…QLCLRIKILE (181 aa)).

Belongs to the DEAD box helicase family. DEAH subfamily.

It catalyses the reaction ATP + H2O = ADP + phosphate + H(+). Its function is as follows. Probable ATP-binding RNA helicase. The polypeptide is Putative ATP-dependent RNA helicase DHX57 (Dhx57) (Mus musculus (Mouse)).